Reading from the N-terminus, the 246-residue chain is Transcription factor MYB113 (246 aa).

HTH myb-type domains lie at Pro5–Ile61 and Lys62–His112. 2 DNA-binding regions (H-T-H motif) span residues Trp33–Leu57 and Trp85–Leu108.

In terms of assembly, interacts with BHLH002/EGL3/MYC146, BHLH012/MYC1 and BHLH042/TT8.

The protein localises to the nucleus. Functionally, transcription activator, when associated with BHLH002/EGL3/MYC146, BHLH012/MYC1, or BHLH042/TT8. The chain is Transcription factor MYB113 (MYB113) from Arabidopsis thaliana (Mouse-ear cress).